We begin with the raw amino-acid sequence, 208 residues long: V-type ATP synthase subunit D (208 aa).

Belongs to the V-ATPase D subunit family.

In terms of biological role, produces ATP from ADP in the presence of a proton gradient across the membrane. In Chlamydia caviae (strain ATCC VR-813 / DSM 19441 / 03DC25 / GPIC) (Chlamydophila caviae), this protein is V-type ATP synthase subunit D.